The chain runs to 1250 residues: Probable autotransporter YfaL (1250 aa).

The first 28 residues, 1 to 28 (MRIIFLRKEYLSLLPSMIASLFSANGVA), serve as a signal peptide directing secretion. The tract at residues 914-951 (RSQEVTPPSPPDPDPTPDPDPTPDPDPTPDPEPTPAYQ) is disordered. Copy 1 of the repeat occupies 919 to 920 (TP). The tract at residues 919–948 (TPPSPPDPDPTPDPDPTPDPDPTPDPEPTP) is 15 X 2 AA approximate tandem repeats of [DTPE]-P. The 2; approximate repeat unit spans residues 921 to 922 (PS). The stretch at 923–924 (PP) is repeat 3. Residues 925-926 (DP) form a 4; approximate repeat. 11 repeat units span residues 927 to 928 (DP), 929 to 930 (TP), 931 to 932 (DP), 933 to 934 (DP), 935 to 936 (TP), 937 to 938 (DP), 939 to 940 (DP), 941 to 942 (TP), 943 to 944 (DP), 945 to 946 (EP), and 947 to 948 (TP). A compositionally biased stretch (acidic residues) spans 928 to 942 (PTPDPDPTPDPDPTP). In terms of domain architecture, Autotransporter spans 980–1250 (AGGDGQTLNL…AGFLSMTVKW (271 aa)).

Post-translationally, an approximately 170 kDa protein is detected in the outer membrane, while a C-terminal 55 kDa fragment is detected in whole cells. The full-length putative autotransporter may be cleaved to release the mature protein from the outer membrane; Pefabloc SC, a Ser-Thr protease inhibitor prevents the appearance of the 55 kDa C--terminal fragment.

Its subcellular location is the periplasm. The protein localises to the secreted. It localises to the cell surface. The protein resides in the cell outer membrane. In terms of biological role, probably an autotransporter. Upon overexpression shows increased adherence to polyvinyl chloride (PVC) plates, increased mature biofilm formation. The sequence is that of Probable autotransporter YfaL (yfaL) from Escherichia coli (strain K12).